The sequence spans 402 residues: Ubiquitin-like modifier-activating enzyme 5 (402 aa).

Gly81, Asp102, Lys125, Asn148, and Asn182 together coordinate ATP. Zn(2+) contacts are provided by Cys224 and Cys227. Cys248 (glycyl thioester intermediate) is an active-site residue. Zn(2+) is bound by residues Cys301 and Cys306. Residues 369–402 (EAPEKSSETSEETVTTAPPDDASLEDLMAQMKSM) form a disordered region.

This sequence belongs to the ubiquitin-activating E1 family. UBA5 subfamily.

E1-like enzyme which activates UFM1. This Drosophila erecta (Fruit fly) protein is Ubiquitin-like modifier-activating enzyme 5.